Reading from the N-terminus, the 165-residue chain is Neurotrophin-3 (165 aa).

The N-terminal stretch at 1–3 (IQS) is a signal peptide. Residues 4–119 (TSMDQGSLSE…VLNQTSRRKR (116 aa)) constitute a propeptide that is removed on maturation. An N-linked (GlcNAc...) asparagine glycan is attached at Asn-112.

Belongs to the NGF-beta family.

The protein localises to the secreted. Functionally, seems to promote the survival of visceral and proprioceptive sensory neurons. The polypeptide is Neurotrophin-3 (NTF3) (Morelia spilota (Carpet python)).